The sequence spans 174 residues: ATP-dependent protease subunit HslV (174 aa).

The active site involves Thr-2. Residues Ala-157, Cys-160, and Thr-163 each contribute to the Na(+) site.

It belongs to the peptidase T1B family. HslV subfamily. As to quaternary structure, a double ring-shaped homohexamer of HslV is capped on each side by a ring-shaped HslU homohexamer. The assembly of the HslU/HslV complex is dependent on binding of ATP.

The protein localises to the cytoplasm. The catalysed reaction is ATP-dependent cleavage of peptide bonds with broad specificity.. With respect to regulation, allosterically activated by HslU binding. In terms of biological role, protease subunit of a proteasome-like degradation complex believed to be a general protein degrading machinery. The polypeptide is ATP-dependent protease subunit HslV (Shewanella baltica (strain OS195)).